A 1088-amino-acid chain; its full sequence is DEAD-box ATP-dependent RNA helicase 40 (1088 aa).

Disordered stretches follow at residues 1–28 (MATTEDTPASAGPRYAPEDPTLPQPWKG), 47–178 (TQYE…QYAH), and 192–254 (TQGL…QNTH). Ala-2 is modified (N-acetylalanine). Residues 20 to 54 (PTLPQPWKGLIDGSTGILYYWNPETNVTQYERPSA) form the WW domain. Composition is skewed to low complexity over residues 87 to 137 (VGHV…SQSM), 148 to 171 (QTYQPTTQQQQQGMQNQHSQMPQQ), and 200 to 215 (QTPQGGPHGQQFPSQQ). Basic and acidic residues predominate over residues 222–231 (PKREGDEFHG). A compositionally biased stretch (polar residues) spans 236–254 (GFSQPHLPNSERSPSQNTH). A Q motif motif is present at residues 435–463 (ITFESSGLPPEILRELLSAGFPSPTPIQA). Residues 466 to 640 (WPIALQSRDI…SDLLVNPVQV (175 aa)) form the Helicase ATP-binding domain. 479 to 486 (AKTGSGKT) contributes to the ATP binding site. Positions 588–591 (DEAD) match the DEAD box motif. The region spanning 669–813 (RLEQILRSQE…QVPPQVRDIA (145 aa)) is the Helicase C-terminal domain. 4 stretches are compositionally biased toward gly residues: residues 861 to 885 (EGGFGGREGGFGGREGGFGGRGGRF), 893 to 902 (GRGGNRGRGF), 911 to 920 (NVGGRGGFGR), and 932 to 944 (FGRGSGRGFGRGV). The segment at 861–1033 (EGGFGGREGG…RRDRAPRVSG (173 aa)) is disordered. Residues 945–963 (GRFDNRRGRSRSRSPDLVR) show a composition bias toward basic and acidic residues. The span at 969 to 983 (SSYSRSRSRSGSYSR) shows a compositional bias: low complexity. Residues 984–1013 (SRSRSRSWSRSRSRSPRHSRDRGGHNRSRS) show a composition bias toward basic residues.

The protein belongs to the DEAD box helicase family. DDX5/DBP2 subfamily.

It is found in the nucleus. The catalysed reaction is ATP + H2O = ADP + phosphate + H(+). ATP-dependent RNA helicase involved nonsense-mediated mRNA decay and ribosome biogenesis through rRNA processing. The polypeptide is DEAD-box ATP-dependent RNA helicase 40 (RH40) (Arabidopsis thaliana (Mouse-ear cress)).